The following is a 459-amino-acid chain: Putrescine aminotransferase (459 aa).

Residues 150–151 (GT) and Gln274 each bind pyridoxal 5'-phosphate. An N6-(pyridoxal phosphate)lysine modification is found at Lys300. A pyridoxal 5'-phosphate-binding site is contributed by Thr332.

It belongs to the class-III pyridoxal-phosphate-dependent aminotransferase family. Putrescine aminotransferase subfamily. Pyridoxal 5'-phosphate serves as cofactor.

It catalyses the reaction an alkane-alpha,omega-diamine + 2-oxoglutarate = an omega-aminoaldehyde + L-glutamate. The enzyme catalyses putrescine + 2-oxoglutarate = 1-pyrroline + L-glutamate + H2O. The catalysed reaction is cadaverine + 2-oxoglutarate = 5-aminopentanal + L-glutamate. It participates in amine and polyamine degradation; putrescine degradation; 4-aminobutanal from putrescine (transaminase route): step 1/1. Catalyzes the aminotransferase reaction from putrescine to 2-oxoglutarate, leading to glutamate and 4-aminobutanal, which spontaneously cyclizes to form 1-pyrroline. This is the first step in one of two pathways for putrescine degradation, where putrescine is converted into 4-aminobutanoate (gamma-aminobutyrate or GABA) via 4-aminobutanal. Also functions as a cadaverine transaminase in a a L-lysine degradation pathway to succinate that proceeds via cadaverine, glutarate and L-2-hydroxyglutarate. In Klebsiella pneumoniae (strain 342), this protein is Putrescine aminotransferase.